The primary structure comprises 773 residues: Polyribonucleotide nucleotidyltransferase (773 aa).

Residues D532 and D538 each coordinate Mg(2+). One can recognise a KH domain in the interval 598 to 657 (PRVITIKVPVDKIGEVIGPKGKVINAITEETGAQISIEDDGTVFVGATDGLSAQAAINKI). One can recognise an S1 motif domain in the interval 669–738 (GERFLGTVVK…KRGKISLVLV (70 aa)). The tract at residues 749 to 773 (APADAGAAQEFGSGTAPADAATASS) is disordered.

The protein belongs to the polyribonucleotide nucleotidyltransferase family. The cofactor is Mg(2+).

The protein localises to the cytoplasm. The enzyme catalyses RNA(n+1) + phosphate = RNA(n) + a ribonucleoside 5'-diphosphate. In terms of biological role, involved in mRNA degradation. Catalyzes the phosphorolysis of single-stranded polyribonucleotides processively in the 3'- to 5'-direction. The polypeptide is Polyribonucleotide nucleotidyltransferase (Mycobacterium leprae (strain Br4923)).